We begin with the raw amino-acid sequence, 360 residues long: Mannonate dehydratase (360 aa).

Belongs to the mannonate dehydratase family. The cofactor is Fe(2+). Mn(2+) is required as a cofactor.

It carries out the reaction D-mannonate = 2-dehydro-3-deoxy-D-gluconate + H2O. It participates in carbohydrate metabolism; pentose and glucuronate interconversion. In terms of biological role, catalyzes the dehydration of D-mannonate. The protein is Mannonate dehydratase (uxuA) of Thermotoga neapolitana.